The sequence spans 376 residues: Spermidine/putrescine import ATP-binding protein PotA (376 aa).

Residues 6–236 (INIVNVNKSF…PADTFVADFL (231 aa)) enclose the ABC transporter domain. 38–45 (GPSGCGKT) provides a ligand contact to ATP.

Belongs to the ABC transporter superfamily. Spermidine/putrescine importer (TC 3.A.1.11.1) family. As to quaternary structure, the complex is composed of two ATP-binding proteins (PotA), two transmembrane proteins (PotB and PotC) and a solute-binding protein (PotD).

The protein localises to the cell inner membrane. It catalyses the reaction ATP + H2O + polyamine-[polyamine-binding protein]Side 1 = ADP + phosphate + polyamineSide 2 + [polyamine-binding protein]Side 1.. Functionally, part of the ABC transporter complex PotABCD involved in spermidine/putrescine import. Responsible for energy coupling to the transport system. The chain is Spermidine/putrescine import ATP-binding protein PotA from Fusobacterium nucleatum subsp. nucleatum (strain ATCC 25586 / DSM 15643 / BCRC 10681 / CIP 101130 / JCM 8532 / KCTC 2640 / LMG 13131 / VPI 4355).